We begin with the raw amino-acid sequence, 848 residues long: ATP-dependent Clp protease ATP-binding subunit ClpC1 (848 aa).

One can recognise a Clp R domain in the interval 2–144; it reads FERFTDRARR…RQQVIQLLSG (143 aa). Repeat stretches follow at residues 5 to 70 and 80 to 144; these read FTDR…IGQG and FTPR…LLSG. Residues 171–418 form an i region; that stretch reads LDQFGRNLTA…RMRIRRMTAP (248 aa). 216–223 lines the ATP pocket; it reads GEPGVGKT. The 36-residue stretch at 425–460 folds into the UVR domain; the sequence is DEKIAEARREKESAIDAQDFEKAASLRDREKTLVAQ. Positions 479 to 670 are II; it reads VDDEQIAEVL…VLIFTSNLGT (192 aa). 553–560 contributes to the ATP binding site; sequence GPSGVGKT. A disordered region spans residues 821–848; it reads TGTRKPPAEPDLAKAGAHSAGGPEPAAR.

This sequence belongs to the ClpA/ClpB family. ClpC subfamily.

In terms of biological role, ATP-dependent specificity component of the Clp protease. It directs the protease to specific substrates. Can perform chaperone functions in the absence of ClpP. Degrades anti-sigma-E factor RseA in the presence of ClpP2. This chain is ATP-dependent Clp protease ATP-binding subunit ClpC1 (clpC1), found in Mycobacterium tuberculosis (strain ATCC 25618 / H37Rv).